The primary structure comprises 142 residues: Small ribosomal subunit protein bS6 (142 aa).

The span at 110–133 shows a compositional bias: basic and acidic residues; the sequence is NKKPSHAKEKHEKTEHTHSHHLEE. Residues 110-142 are disordered; it reads NKKPSHAKEKHEKTEHTHSHHLEEAESVGSHSE.

The protein belongs to the bacterial ribosomal protein bS6 family.

In terms of biological role, binds together with bS18 to 16S ribosomal RNA. The sequence is that of Small ribosomal subunit protein bS6 from Helicobacter pylori (strain HPAG1).